The primary structure comprises 377 residues: Histidine protein methyltransferase 1 (377 aa).

The protein belongs to the methyltransferase superfamily. METTL18 family.

It is found in the cytoplasm. It localises to the nucleus. It carries out the reaction L-histidyl-[protein] + S-adenosyl-L-methionine = N(tele)-methyl-L-histidyl-[protein] + S-adenosyl-L-homocysteine + H(+). Functionally, protein-histidine N-methyltransferase that mediates methylation of RPL3 at 'His-243'. Methylates ribosome-associated RPL3, but not free RPL3, thereby regulating 60S subunit assembly. In addition to RPL3, mediates His methylation of other proteins. The sequence is that of Histidine protein methyltransferase 1 from Saccharomyces cerevisiae (strain ATCC 204508 / S288c) (Baker's yeast).